We begin with the raw amino-acid sequence, 273 residues long: MSAIGSQKRLTPPRISAMKGGKPIVCLTAYTTPMARLLDDHCDLLLVGDSLGMVLYGMETTIGVTLDMMIAHGKAVMRGVAKACVVVDMPFGSYQESKEVAFRNAVRILQETGCDAVKLEGGEEMAETIAFLTKRGIPVMGHIGLMPQQVQTAGGYRSVGHSEHETSKIRRDAHAIGGSGAFAVVIEGTVEPLAREVTSAMHIPTIGIGASAACDGQVLVSDDILGLFNDFKPRFVKRYDELGKRVADAVAAYAEDVRSRKFPAADHTFKRRP.

Asp-49 and Asp-88 together coordinate Mg(2+). Residues 49-50, Asp-88, and Lys-118 each bind 3-methyl-2-oxobutanoate; that span reads DS. Residue Glu-120 participates in Mg(2+) binding. Catalysis depends on Glu-187, which acts as the Proton acceptor.

Belongs to the PanB family. As to quaternary structure, homodecamer; pentamer of dimers. It depends on Mg(2+) as a cofactor.

It localises to the cytoplasm. The enzyme catalyses 3-methyl-2-oxobutanoate + (6R)-5,10-methylene-5,6,7,8-tetrahydrofolate + H2O = 2-dehydropantoate + (6S)-5,6,7,8-tetrahydrofolate. The protein operates within cofactor biosynthesis; (R)-pantothenate biosynthesis; (R)-pantoate from 3-methyl-2-oxobutanoate: step 1/2. Catalyzes the reversible reaction in which hydroxymethyl group from 5,10-methylenetetrahydrofolate is transferred onto alpha-ketoisovalerate to form ketopantoate. The polypeptide is 3-methyl-2-oxobutanoate hydroxymethyltransferase (Rhizobium etli (strain ATCC 51251 / DSM 11541 / JCM 21823 / NBRC 15573 / CFN 42)).